The following is a 654-amino-acid chain: Protein fem-1 homolog A-A (654 aa).

7 ANK repeats span residues 2-31 (DLHT…REEL), 40-70 (GGGT…SVEA), 82-111 (EGAP…SVNR), 115-145 (TNST…DLEV), 149-178 (HGHT…QVNR), 182-211 (KGNT…RMER), and 214-243 (YGMT…GHEQ). At S108 the chain carries Phosphoserine. Residues 242–265 (EQLSGTELPGEGSSQVAGNHCSTP) are disordered. The span at 253 to 263 (GSSQVAGNHCS) shows a compositional bias: polar residues. 2 TPR repeats span residues 283–317 (VEAL…RHQG) and 375–408 (SYYI…QQNN). 2 ANK repeats span residues 519 to 561 (NGFT…DPDS) and 565 to 594 (DNNT…HMDA). S608 is modified (phosphoserine).

The protein belongs to the fem-1 family. As to quaternary structure, component of a CRL2 E3 ubiquitin-protein ligase complex, also named ECS (Elongin BC-CUL2/5-SOCS-box protein) complex, composed of CUL2, Elongin BC (ELOB and ELOC), RBX1 and substrate-specific adapter FEM1A. Interacts with PTGER4. Interacts with NFKB1; the interaction is direct. Phosphorylated; highly phosphorylated in myoblasts and myotubes. Phosphorylation at Ser-108 and Ser-608 promote PGE2-EP4-mediated inhibition of inflammation. Dephosphorylated by protein phosphatase 2A (PP2A). Preferentially expressed in cardiac muscle, brain and liver (at protein level). Also expressed in skeletal muscle.

The protein resides in the mitochondrion. Its subcellular location is the cytoplasm. It functions in the pathway protein modification; protein ubiquitination. In terms of biological role, substrate-recognition component of a Cul2-RING (CRL2) E3 ubiquitin-protein ligase complex of the DesCEND (destruction via C-end degrons) pathway, which recognizes a C-degron located at the extreme C terminus of target proteins, leading to their ubiquitination and degradation. The C-degron recognized by the DesCEND pathway is usually a motif of less than ten residues and can be present in full-length proteins, truncated proteins or proteolytically cleaved forms. The CRL2(FEM1A) complex specifically recognizes proteins with an arginine at the C-terminus: recognizes and binds proteins ending with -Lys/Arg-Xaa-Arg and -Lys/Arg-Xaa-Xaa-Arg C-degrons, such as SIL1 or OR51B2, leading to their ubiquitination and degradation. Involved in PGE2-EP4-mediated inhibition of inflammation of macrophages via interaction with NFKB1 and PTGER4. Promotes inflammation in brain microglia through MAP2K4/MKK4-mediated signaling. The polypeptide is Protein fem-1 homolog A-A (Mus musculus (Mouse)).